Here is a 64-residue protein sequence, read N- to C-terminus: MPKMKTNSAASKRAKITGTGKVKHVGSAMRHNLEHKSARKRRELSADDVLRGGQAKKLHQLLQK.

Polar residues predominate over residues 1 to 10 (MPKMKTNSAA). The disordered stretch occupies residues 1 to 64 (MPKMKTNSAA…AKKLHQLLQK (64 aa)). Positions 54–64 (QAKKLHQLLQK) are enriched in basic residues.

It belongs to the bacterial ribosomal protein bL35 family.

The sequence is that of Large ribosomal subunit protein bL35 from Bifidobacterium longum (strain NCC 2705).